Consider the following 248-residue polypeptide: MHQTNFGFNKVDYTKKQWLVNNIFSRVADKYDLMNDLMSIGLHRLWKNEFIMQIPNLNSNILDVASGSGDIALQLAKKAKARGNNISLILSDINEEMLNNAKKKSIDLNLFQNMKFIVANAEELPFLDNSFDYYTIAFGIRNVPDINKALKEAYRVLKPMGKFICLEFSKVKEGILKDFYKFYSFTIIPSIGQIIARNKEAYEYLVESIALFPSQDDFRIMIKASGFEEVHYKNLSGGIVAIHSAYKI.

S-adenosyl-L-methionine-binding positions include S68, D92, and 120 to 121 (NA).

Belongs to the class I-like SAM-binding methyltransferase superfamily. MenG/UbiE family.

The enzyme catalyses a 2-demethylmenaquinol + S-adenosyl-L-methionine = a menaquinol + S-adenosyl-L-homocysteine + H(+). It catalyses the reaction a 2-methoxy-6-(all-trans-polyprenyl)benzene-1,4-diol + S-adenosyl-L-methionine = a 5-methoxy-2-methyl-3-(all-trans-polyprenyl)benzene-1,4-diol + S-adenosyl-L-homocysteine + H(+). It functions in the pathway quinol/quinone metabolism; menaquinone biosynthesis; menaquinol from 1,4-dihydroxy-2-naphthoate: step 2/2. It participates in cofactor biosynthesis; ubiquinone biosynthesis. Methyltransferase required for the conversion of demethylmenaquinol (DMKH2) to menaquinol (MKH2) and the conversion of 2-polyprenyl-6-methoxy-1,4-benzoquinol (DDMQH2) to 2-polyprenyl-3-methyl-6-methoxy-1,4-benzoquinol (DMQH2). This chain is Ubiquinone/menaquinone biosynthesis C-methyltransferase UbiE, found in Rickettsia typhi (strain ATCC VR-144 / Wilmington).